A 240-amino-acid polypeptide reads, in one-letter code: HTH-type transcriptional regulator Mce2R (240 aa).

One can recognise an HTH gntR-type domain in the interval 9–77 (RSVPEEVFEQ…QGDVTTVRDF (69 aa)). A DNA-binding region (H-T-H motif) is located at residues 37–56 (ERRLAELLGVSRPAVREALK).

Its function is as follows. Negatively regulates the expression of its operon as well as expression of end (endonuclease 4). This is HTH-type transcriptional regulator Mce2R (mce2R) from Mycobacterium tuberculosis (strain CDC 1551 / Oshkosh).